We begin with the raw amino-acid sequence, 114 residues long: Gamma-glutamylcyclotransferase family protein ytfP (114 aa).

This sequence belongs to the gamma-glutamylcyclotransferase family.

The protein resides in the cytoplasm. Its function is as follows. May play a role in antibiotic biosynthesis. This Citrobacter rodentium (strain ICC168) (Citrobacter freundii biotype 4280) protein is Gamma-glutamylcyclotransferase family protein ytfP (ytfP).